The sequence spans 230 residues: Cytochrome b6-f complex iron-sulfur subunit, chloroplastic (230 aa).

The transit peptide at 1–50 directs the protein to the chloroplast; that stretch reads MSSTTLSPTTPSQLCSGKSGISCPSIALLVKPTRTQMTGRGNKGMKITCQ. Residues 72–92 form a helical membrane-spanning segment; sequence LLGALSLPTAGMLVPYGSFLV. In terms of domain architecture, Rieske spans 115-213; that stretch reads ATEWLKTHAP…VGVEDGKVVF (99 aa). Residues C157, H159, C175, and H178 each coordinate [2Fe-2S] cluster. A disulfide bridge links C162 with C177.

This sequence belongs to the Rieske iron-sulfur protein family. In terms of assembly, the 4 large subunits of the cytochrome b6-f complex are cytochrome b6, subunit IV (17 kDa polypeptide, petD), cytochrome f and the Rieske protein, while the 4 small subunits are petG, petL, petM and petN. The complex functions as a dimer. [2Fe-2S] cluster is required as a cofactor.

It localises to the plastid. The protein localises to the chloroplast thylakoid membrane. It catalyses the reaction 2 oxidized [plastocyanin] + a plastoquinol + 2 H(+)(in) = 2 reduced [plastocyanin] + a plastoquinone + 4 H(+)(out). In terms of biological role, component of the cytochrome b6-f complex, which mediates electron transfer between photosystem II (PSII) and photosystem I (PSI), cyclic electron flow around PSI, and state transitions. The chain is Cytochrome b6-f complex iron-sulfur subunit, chloroplastic (petC) from Pisum sativum (Garden pea).